The primary structure comprises 555 residues: Beta-caryophyllene synthase (555 aa).

Residues Asp313, Asp317, Asp456, and Glu464 each coordinate Mg(2+). The DDXXD motif signature appears at 313-317 (DDIYD).

This sequence belongs to the terpene synthase family. It depends on Mg(2+) as a cofactor.

It carries out the reaction (2E,6E)-farnesyl diphosphate = (+)-(E)-beta-caryophyllene + diphosphate. It functions in the pathway secondary metabolite biosynthesis; terpenoid biosynthesis. Its function is as follows. Sesquiterpene synthase converting farnesyl diphosphate to beta-caryophyllene as the major product. The polypeptide is Beta-caryophyllene synthase (Phyla dulcis (Aztec sweet herb)).